Here is a 709-residue protein sequence, read N- to C-terminus: Polyribonucleotide nucleotidyltransferase (709 aa).

Mg(2+)-binding residues include aspartate 482 and aspartate 488. A KH domain is found at 549–608 (PRIITMSIDPDKIREVIGPGGKVINKIIAETGVKIDIEDDGRIFIAATDTEAANKAVRII). Positions 618-686 (GKVYTGKVTR…KQGRINLSRK (69 aa)) constitute an S1 motif domain.

It belongs to the polyribonucleotide nucleotidyltransferase family. It depends on Mg(2+) as a cofactor.

Its subcellular location is the cytoplasm. The catalysed reaction is RNA(n+1) + phosphate = RNA(n) + a ribonucleoside 5'-diphosphate. Functionally, involved in mRNA degradation. Catalyzes the phosphorolysis of single-stranded polyribonucleotides processively in the 3'- to 5'-direction. The protein is Polyribonucleotide nucleotidyltransferase of Heliobacterium modesticaldum (strain ATCC 51547 / Ice1).